A 97-amino-acid chain; its full sequence is uncharacterized protein (97 aa).

The signal sequence occupies residues 1 to 21; sequence MNKKFSISLLSTILAFLLVLG. Cys22 carries the N-palmitoyl cysteine lipid modification. Residue Cys22 is the site of S-diacylglycerol cysteine attachment.

It to B.burgdorferi BBD15.

The protein localises to the cell membrane. This is an uncharacterized protein from Borreliella burgdorferi (strain ATCC 35210 / DSM 4680 / CIP 102532 / B31) (Borrelia burgdorferi).